A 91-amino-acid polypeptide reads, in one-letter code: Protein translocase subunit SecG (91 aa).

A run of 2 helical transmembrane segments spans residues 16-36 (HTFL…VVLL) and 71-91 (LTII…YLGM).

This sequence belongs to the SecG family. In terms of assembly, component of the Sec protein translocase complex. Heterotrimer consisting of SecY, SecE and SecG subunits. The heterotrimers can form oligomers, although 1 heterotrimer is thought to be able to translocate proteins. Interacts with SecDF, and other proteins may be involved. The channel interacts with SecA via subunit SecY. Also part of the accessory SecA2/SecY2 protein translocation apparatus required to export cell wall protein GspB.

It is found in the cell membrane. Its function is as follows. Subunit of the protein translocation channel SecYEG. While not essential, it considerably increases the export efficiency of extracellular proteins. This chain is Protein translocase subunit SecG, found in Staphylococcus aureus (strain NCTC 8325 / PS 47).